The sequence spans 470 residues: 3-isopropylmalate dehydratase large subunit (470 aa).

[4Fe-4S] cluster-binding residues include C351, C411, and C414.

It belongs to the aconitase/IPM isomerase family. LeuC type 1 subfamily. As to quaternary structure, heterodimer of LeuC and LeuD. Requires [4Fe-4S] cluster as cofactor.

It catalyses the reaction (2R,3S)-3-isopropylmalate = (2S)-2-isopropylmalate. Its pathway is amino-acid biosynthesis; L-leucine biosynthesis; L-leucine from 3-methyl-2-oxobutanoate: step 2/4. Functionally, catalyzes the isomerization between 2-isopropylmalate and 3-isopropylmalate, via the formation of 2-isopropylmaleate. The polypeptide is 3-isopropylmalate dehydratase large subunit (Shewanella frigidimarina (strain NCIMB 400)).